Here is a 1097-residue protein sequence, read N- to C-terminus: Translation initiation factor IF-2 (1097 aa).

Residues 79–458 (LEKRVSPQAD…RVIKKKPKKA (380 aa)) form a disordered region. The segment covering 97 to 112 (AKKEASQEKADAHAKL) has biased composition (basic and acidic residues). Residues 157–173 (AATLAVEEAPIAAAPTE) show a composition bias toward low complexity. Composition is skewed to basic and acidic residues over residues 174-190 (EPMHNSEAELPESKIDS) and 202-221 (VEVHLEPKEQEVQELNHAEE). Low complexity predominate over residues 224–236 (TPTTEASSEETSA). A compositionally biased stretch (polar residues) spans 258-267 (RKTQNTTNVS). A compositionally biased stretch (basic and acidic residues) spans 268–286 (EENKQHEKQPETLKSDKAM). The span at 340 to 363 (SDSLQAEISRQQNEISNRFSQSEN) shows a compositional bias: polar residues. The span at 376–385 (HKKKRKRKKN) shows a compositional bias: basic residues. The span at 402–443 (PKQEEKPVKKEKPKEREKPAAGKKEQTPGKKPVREDQKERVL) shows a compositional bias: basic and acidic residues. The 171-residue stretch at 591–761 (TRPPVVTIMG…LVEAELLELK (171 aa)) folds into the tr-type G domain. The segment at 600–607 (GHVDHGKT) is G1. 600-607 (GHVDHGKT) provides a ligand contact to GTP. A G2 region spans residues 625-629 (GITQH). The G3 stretch occupies residues 647 to 650 (DTPG). GTP-binding positions include 647–651 (DTPGH) and 701–704 (NKID). The interval 701–704 (NKID) is G4. The interval 737-739 (SAK) is G5.

This sequence belongs to the TRAFAC class translation factor GTPase superfamily. Classic translation factor GTPase family. IF-2 subfamily.

It localises to the cytoplasm. Functionally, one of the essential components for the initiation of protein synthesis. Protects formylmethionyl-tRNA from spontaneous hydrolysis and promotes its binding to the 30S ribosomal subunits. Also involved in the hydrolysis of GTP during the formation of the 70S ribosomal complex. The protein is Translation initiation factor IF-2 of Chloroherpeton thalassium (strain ATCC 35110 / GB-78).